The sequence spans 66 residues: Conotoxin Lt5.6 (66 aa).

A signal peptide spans Met-1–Pro-19. Residues Lys-20–Ala-54 constitute a propeptide that is removed on maturation.

It belongs to the conotoxin T superfamily. Contains 2 disulfide bonds that can be either 'C1-C3, C2-C4' or 'C1-C4, C2-C3', since these disulfide connectivities have been observed for conotoxins with cysteine framework V (for examples, see AC P0DQQ7 and AC P81755). As to expression, expressed by the venom duct.

Its subcellular location is the secreted. The polypeptide is Conotoxin Lt5.6 (Conus litteratus (Lettered cone)).